Reading from the N-terminus, the 7839-residue chain is Nonribosomal peptide synthetase GRA1 (7839 aa).

A compositionally biased stretch (polar residues) spans Met1 to Gly23. The segment at Met1–Glu26 is disordered. The tract at residues Leu264–Ile650 is adenylation 1. The Carrier 1 domain maps to Ser793 to Lys866. Ser827 carries the O-(pantetheine 4'-phosphoryl)serine modification. The segment at Asp916–Ile1332 is condensation 1. The adenylation 2 stretch occupies residues Phe1351 to Arg1742. The region spanning Glu1880–Asp1957 is the Carrier 2 domain. At Ser1918 the chain carries O-(pantetheine 4'-phosphoryl)serine. Residues Asp1997–Ile2413 are condensation 2. Residues Phe2432–Arg2828 are adenylation 3. A Carrier 3 domain is found at Ile2963–Thr3040. Ser3001 is modified (O-(pantetheine 4'-phosphoryl)serine). A condensation 3 region spans residues Asp3084–His3496. The adenylation 4 stretch occupies residues Arg3520–Arg3923. Residues Arg4057–Ser4134 enclose the Carrier 4 domain. Residue Ser4095 is modified to O-(pantetheine 4'-phosphoryl)serine. A condensation 4 region spans residues Asn4234–Ile4569. The adenylation 5 stretch occupies residues His4591–Phe4982. The Carrier 5 domain occupies Ala5113–Gln5189. Ser5150 carries the O-(pantetheine 4'-phosphoryl)serine modification. Residues Glu5224–Leu5653 are condensation 5. Positions Phe5671–Arg6069 are adenylation 6. The region spanning Phe6207–Thr6282 is the Carrier 6 domain. Position 6243 is an O-(pantetheine 4'-phosphoryl)serine (Ser6243). The condensation 6 stretch occupies residues Gln6321–Pro6730. An adenylation 7 region spans residues Glu6756 to Leu7147. In terms of domain architecture, Carrier 7 spans Lys7290–Ile7366. An O-(pantetheine 4'-phosphoryl)serine modification is found at Ser7327. Residues His7404–Ser7704 are condensation7.

The protein belongs to the NRP synthetase family.

Its pathway is mycotoxin biosynthesis. Nonribosomal peptide synthetase; part of the gene cluster that mediates the biosynthesis of gramillins A and B, bicyclic lipopeptides that induce cell death in maize leaves but not in wheat leaves. The nonribosomal peptide synthetase GRA1 incorporates respectively a glutamic adic (Glu), a leucine (Leu), a serine (Ser), a hydroxyglutamine (HOGln), a 2-amino decanoic acid, and 2 cysteins (CysB and CysA). The biosynthesis of 2-amino decanoic acid incorporated in gramillins could be initiated by a fatty acid synthase composed of the alpha and beta subunits FGSG_00036 and FGSG_11656. The cytochrome P450 monooxygenase FGSG_15680 could hydroxylate the fatty acid chain. Subsequent oxidation to the ketone by the oxidoreductase FGSG_00048 and transamination by aminotransferase FGSG_00049 could form 2-amino-decanoic acid. On the other hand, FGSG_15680 could also be responsible for the HO-modified glutamine at the gamma-position. Whether hydroxylation occurs on the fully assembled product or on the Gln residue prior to assembly into the gramillins requires further proof. The thioredoxin FGSG_00043 could also be required for the disulfide-bond formation between CysA and CysB. The specific involvement of the remaining proteins from the cluster is more difficult to discern, but could have broader regulatory (FGSG_00040 and FGSG_11657) or enzymatic functions (FGSG_00044 and FGSG_00045). The final C-domain of GRA1 does not possess the expected sequence of a termination CT domain, often implicated in macrocyclization and release of a cyclopeptidein fungal NRPs; and the thioesterase FGSG_00047 may act in concert with the terminal C-domain of GRA1 to catalyze the formation of the macrocyclic anhydride and release of the products. The chain is Nonribosomal peptide synthetase GRA1 from Gibberella zeae (strain ATCC MYA-4620 / CBS 123657 / FGSC 9075 / NRRL 31084 / PH-1) (Wheat head blight fungus).